We begin with the raw amino-acid sequence, 406 residues long: Multifunctional CCA protein (406 aa).

The ATP site is built by Gly-8 and Arg-11. Positions 8 and 11 each coordinate CTP. Mg(2+) is bound by residues Glu-21 and Asp-23. Arg-91, Arg-137, and Arg-140 together coordinate ATP. Arg-91, Arg-137, and Arg-140 together coordinate CTP. The HD domain occupies 225–326 (TGIHTLKVLE…LKLLNRVDAF (102 aa)).

It belongs to the tRNA nucleotidyltransferase/poly(A) polymerase family. Bacterial CCA-adding enzyme type 1 subfamily. As to quaternary structure, monomer. Can also form homodimers and oligomers. Mg(2+) serves as cofactor. Requires Ni(2+) as cofactor.

It carries out the reaction a tRNA precursor + 2 CTP + ATP = a tRNA with a 3' CCA end + 3 diphosphate. The enzyme catalyses a tRNA with a 3' CCA end + 2 CTP + ATP = a tRNA with a 3' CCACCA end + 3 diphosphate. Its function is as follows. Catalyzes the addition and repair of the essential 3'-terminal CCA sequence in tRNAs without using a nucleic acid template. Adds these three nucleotides in the order of C, C, and A to the tRNA nucleotide-73, using CTP and ATP as substrates and producing inorganic pyrophosphate. tRNA 3'-terminal CCA addition is required both for tRNA processing and repair. Also involved in tRNA surveillance by mediating tandem CCA addition to generate a CCACCA at the 3' terminus of unstable tRNAs. While stable tRNAs receive only 3'-terminal CCA, unstable tRNAs are marked with CCACCA and rapidly degraded. The chain is Multifunctional CCA protein from Nitrosococcus oceani (strain ATCC 19707 / BCRC 17464 / JCM 30415 / NCIMB 11848 / C-107).